A 244-amino-acid chain; its full sequence is Na(+)-translocating NADH-quinone reductase subunit E (244 aa).

Transmembrane regions (helical) follow at residues 11 to 31 (LLGI…TFLG), 50 to 70 (MSVA…HYFI), 90 to 110 (FLEL…LELL), 123 to 143 (GIFL…LFGI), 153 to 173 (VVFS…FATI), and 191 to 211 (ISFI…GIDI).

Belongs to the NqrDE/RnfAE family. Composed of six subunits; NqrA, NqrB, NqrC, NqrD, NqrE and NqrF.

The protein localises to the cell inner membrane. The catalysed reaction is a ubiquinone + n Na(+)(in) + NADH + H(+) = a ubiquinol + n Na(+)(out) + NAD(+). Its function is as follows. NQR complex catalyzes the reduction of ubiquinone-1 to ubiquinol by two successive reactions, coupled with the transport of Na(+) ions from the cytoplasm to the periplasm. NqrA to NqrE are probably involved in the second step, the conversion of ubisemiquinone to ubiquinol. This Chlamydia trachomatis serovar L2 (strain ATCC VR-902B / DSM 19102 / 434/Bu) protein is Na(+)-translocating NADH-quinone reductase subunit E.